Reading from the N-terminus, the 191-residue chain is MAAQIPIVAATSTPTVARNSKKRPASPSHNSSGGGYGASKKKKLSASGFAQGVSIEAMSESKMASSELSSGPVEKAAKPLPFKDPNFVHSGHGGAVAGKKNRTWKNLKQILAAERALPWQLNDPNYFSIDAPPSFKPAKKYSDVSGLLANYTDPQSKLRFSTVEEFSYIRRLPSDVVTGYLTLRKATSIVP.

A disordered region spans residues 1-41 (MAAQIPIVAATSTPTVARNSKKRPASPSHNSSGGGYGASKK).

In terms of assembly, component of the chromatin remodeling INO80 complex; specifically part of a complex module associated with the helicase ATP-binding and the helicase C-terminal domain of INO80. Component of some MLL1/MLL complex, at least composed of the core components KMT2A/MLL1, ASH2L, HCFC1/HCF1, WDR5 and RBBP5, as well as the facultative components BACC1, CHD8, E2F6, HSP70, INO80C, KANSL1, LAS1L, MAX, MCRS1, MGA, MYST1/MOF, PELP1, PHF20, PRP31, RING2, RUVB1/TIP49A, RUVB2/TIP49B, SENP3, TAF1, TAF4, TAF6, TAF7, TAF9 and TEX10.

It localises to the nucleus. Proposed core component of the chromatin remodeling INO80 complex which is involved in transcriptional regulation, DNA replication and probably DNA repair. The chain is INO80 complex subunit C (Ino80c) from Rattus norvegicus (Rat).